Consider the following 658-residue polypeptide: DNA mismatch repair protein MutL (658 aa).

Over residues 114-130 (RQEDSSHATQVKAEDGK) the composition is skewed to basic and acidic residues. The tract at residues 114 to 137 (RQEDSSHATQVKAEDGKLSSPTAA) is disordered.

This sequence belongs to the DNA mismatch repair MutL/HexB family.

Its function is as follows. This protein is involved in the repair of mismatches in DNA. It is required for dam-dependent methyl-directed DNA mismatch repair. May act as a 'molecular matchmaker', a protein that promotes the formation of a stable complex between two or more DNA-binding proteins in an ATP-dependent manner without itself being part of a final effector complex. The polypeptide is DNA mismatch repair protein MutL (Neisseria meningitidis serogroup C / serotype 2a (strain ATCC 700532 / DSM 15464 / FAM18)).